A 321-amino-acid polypeptide reads, in one-letter code: GTP 3',8-cyclase (321 aa).

The 223-residue stretch at 5–227 (SYDRVVDYLR…DEGYDGASPS (223 aa)) folds into the Radical SAM core domain. R14 is a binding site for GTP. [4Fe-4S] cluster contacts are provided by C21 and C25. Y27 serves as a coordination point for S-adenosyl-L-methionine. Residue C28 coordinates [4Fe-4S] cluster. A GTP-binding site is contributed by R64. Residue G68 coordinates S-adenosyl-L-methionine. T95 lines the GTP pocket. S119 serves as a coordination point for S-adenosyl-L-methionine. K155 provides a ligand contact to GTP. Residue M189 participates in S-adenosyl-L-methionine binding. [4Fe-4S] cluster contacts are provided by C249 and C252. Residue 254–256 (RIR) participates in GTP binding. C266 is a [4Fe-4S] cluster binding site.

This sequence belongs to the radical SAM superfamily. MoaA family. In terms of assembly, monomer and homodimer. The cofactor is [4Fe-4S] cluster.

The catalysed reaction is GTP + AH2 + S-adenosyl-L-methionine = (8S)-3',8-cyclo-7,8-dihydroguanosine 5'-triphosphate + 5'-deoxyadenosine + L-methionine + A + H(+). The protein operates within cofactor biosynthesis; molybdopterin biosynthesis. Functionally, catalyzes the cyclization of GTP to (8S)-3',8-cyclo-7,8-dihydroguanosine 5'-triphosphate. This Sulfurimonas denitrificans (strain ATCC 33889 / DSM 1251) (Thiomicrospira denitrificans (strain ATCC 33889 / DSM 1251)) protein is GTP 3',8-cyclase.